A 231-amino-acid chain; its full sequence is Cytochrome c oxidase subunit 2 (231 aa).

At 1-30 (MNNFFQGYNLLFQHSLFASYMDWFHAFNCS) the chain is on the mitochondrial intermembrane side. Residues 31 to 51 (LLLGVLVFVTLLFGYLIFSTF) form a helical membrane-spanning segment. Residues 52 to 64 (YFKSKKIEYQFGE) lie on the Mitochondrial matrix side of the membrane. A helical membrane pass occupies residues 65 to 85 (LLCSIFPTIILLMQMVPSLSL). Residues 86 to 231 (LYYYGLMNLD…FKSWCFGTME (146 aa)) lie on the Mitochondrial intermembrane side of the membrane. Residues H164, C199, E201, C203, H207, and M210 each contribute to the Cu cation site. E201 contributes to the Mg(2+) binding site.

The protein belongs to the cytochrome c oxidase subunit 2 family. As to quaternary structure, component of the cytochrome c oxidase (complex IV, CIV), a multisubunit enzyme composed of a catalytic core of 3 subunits and several supernumerary subunits. The complex exists as a monomer or a dimer and forms supercomplexes (SCs) in the inner mitochondrial membrane with ubiquinol-cytochrome c oxidoreductase (cytochrome b-c1 complex, complex III, CIII). It depends on Cu cation as a cofactor.

The protein localises to the mitochondrion inner membrane. It catalyses the reaction 4 Fe(II)-[cytochrome c] + O2 + 8 H(+)(in) = 4 Fe(III)-[cytochrome c] + 2 H2O + 4 H(+)(out). Component of the cytochrome c oxidase, the last enzyme in the mitochondrial electron transport chain which drives oxidative phosphorylation. The respiratory chain contains 3 multisubunit complexes succinate dehydrogenase (complex II, CII), ubiquinol-cytochrome c oxidoreductase (cytochrome b-c1 complex, complex III, CIII) and cytochrome c oxidase (complex IV, CIV), that cooperate to transfer electrons derived from NADH and succinate to molecular oxygen, creating an electrochemical gradient over the inner membrane that drives transmembrane transport and the ATP synthase. Cytochrome c oxidase is the component of the respiratory chain that catalyzes the reduction of oxygen to water. Electrons originating from reduced cytochrome c in the intermembrane space (IMS) are transferred via the dinuclear copper A center (CU(A)) of subunit 2 and heme A of subunit 1 to the active site in subunit 1, a binuclear center (BNC) formed by heme A3 and copper B (CU(B)). The BNC reduces molecular oxygen to 2 water molecules using 4 electrons from cytochrome c in the IMS and 4 protons from the mitochondrial matrix. This chain is Cytochrome c oxidase subunit 2 (cox-2), found in Caenorhabditis briggsae.